Reading from the N-terminus, the 1171-residue chain is ATP-dependent helicase/deoxyribonuclease subunit B (1171 aa).

A UvrD-like helicase ATP-binding domain is found at 1–390; that stretch reads MSLRFVIGRA…HPLVECIRSA (390 aa). 8–15 is a binding site for ATP; the sequence is GRAGSGKS. The 307-residue stretch at 281 to 587 folds into the UvrD-like helicase C-terminal domain; that stretch reads MEQPRFHSPA…QFANIPPSLD (307 aa). Positions 805, 1129, 1132, and 1138 each coordinate [4Fe-4S] cluster.

It belongs to the helicase family. AddB/RexB type 1 subfamily. Heterodimer of AddA and AddB. The cofactor is Mg(2+). It depends on [4Fe-4S] cluster as a cofactor.

Its function is as follows. The heterodimer acts as both an ATP-dependent DNA helicase and an ATP-dependent, dual-direction single-stranded exonuclease. Recognizes the chi site generating a DNA molecule suitable for the initiation of homologous recombination. The AddB subunit has 5' -&gt; 3' nuclease activity but not helicase activity. This Bacillus cereus (strain ZK / E33L) protein is ATP-dependent helicase/deoxyribonuclease subunit B.